A 193-amino-acid chain; its full sequence is Peptidyl-tRNA hydrolase (193 aa).

Tyr16 is a tRNA binding site. His21 (proton acceptor) is an active-site residue. Residues Phe67, Asn69, and Asn115 each coordinate tRNA.

The protein belongs to the PTH family. As to quaternary structure, monomer.

Its subcellular location is the cytoplasm. The catalysed reaction is an N-acyl-L-alpha-aminoacyl-tRNA + H2O = an N-acyl-L-amino acid + a tRNA + H(+). Functionally, hydrolyzes ribosome-free peptidyl-tRNAs (with 1 or more amino acids incorporated), which drop off the ribosome during protein synthesis, or as a result of ribosome stalling. In terms of biological role, catalyzes the release of premature peptidyl moieties from peptidyl-tRNA molecules trapped in stalled 50S ribosomal subunits, and thus maintains levels of free tRNAs and 50S ribosomes. The polypeptide is Peptidyl-tRNA hydrolase (Psychrobacter arcticus (strain DSM 17307 / VKM B-2377 / 273-4)).